The sequence spans 779 residues: Pleckstrin homology domain-containing family A member 4 (779 aa).

The 100-residue stretch at 54–153 (PVHIRGWLHK…WLRALGRASR (100 aa)) folds into the PH domain. Disordered stretches follow at residues 152 to 352 (SRAE…LPGP), 492 to 670 (AGLG…EGHR), and 691 to 764 (MTGG…LPQD). A Phosphoserine modification is found at serine 164. A compositionally biased stretch (basic and acidic residues) spans 184 to 193 (SRGEEGRISE). Over residues 315 to 332 (QHWSQEPRTQAHSGSPTY) the composition is skewed to polar residues. Positions 525-535 (PESLELSSPRS) are enriched in low complexity. Residues 536-551 (PETDWGRPPGGDKDLA) are compositionally biased toward basic and acidic residues. At serine 559 the chain carries Phosphoserine. Basic and acidic residues predominate over residues 594–603 (QLERMRRNQE). Over residues 647 to 663 (LRSSGSWSSPRNTTPYL) the composition is skewed to polar residues. Over residues 704–724 (PGVPLPPSDPTRQETPPPRSP) the composition is skewed to pro residues.

In terms of tissue distribution, highly expressed in melanoma. Detected at low levels in heart, skeletal muscle, kidney, liver and small intestine.

The protein resides in the cytoplasm. The protein localises to the membrane. In terms of biological role, binds specifically to phosphatidylinositol 3-phosphate (PtdIns3P), but not to other phosphoinositides. In Homo sapiens (Human), this protein is Pleckstrin homology domain-containing family A member 4 (PLEKHA4).